Reading from the N-terminus, the 180-residue chain is Large ribosomal subunit protein uL6c (180 aa).

Belongs to the universal ribosomal protein uL6 family. In terms of assembly, part of the 50S ribosomal subunit.

Its subcellular location is the plastid. It localises to the chloroplast. Functionally, binds 23S rRNA. The polypeptide is Large ribosomal subunit protein uL6c (rpl6) (Pyropia yezoensis (Susabi-nori)).